Reading from the N-terminus, the 327-residue chain is Glycerol-3-phosphate dehydrogenase [NAD(P)+] (327 aa).

4 residues coordinate NADPH: serine 10, phenylalanine 11, arginine 31, and lysine 108. Sn-glycerol 3-phosphate is bound by residues lysine 108, glycine 136, and serine 138. Alanine 140 contributes to the NADPH binding site. Residues lysine 191, aspartate 246, serine 256, arginine 257, and asparagine 258 each coordinate sn-glycerol 3-phosphate. The active-site Proton acceptor is lysine 191. Residue arginine 257 participates in NADPH binding. NADPH contacts are provided by leucine 281 and glutamate 283.

Belongs to the NAD-dependent glycerol-3-phosphate dehydrogenase family.

It localises to the cytoplasm. It catalyses the reaction sn-glycerol 3-phosphate + NAD(+) = dihydroxyacetone phosphate + NADH + H(+). The catalysed reaction is sn-glycerol 3-phosphate + NADP(+) = dihydroxyacetone phosphate + NADPH + H(+). It participates in membrane lipid metabolism; glycerophospholipid metabolism. Its function is as follows. Catalyzes the reduction of the glycolytic intermediate dihydroxyacetone phosphate (DHAP) to sn-glycerol 3-phosphate (G3P), the key precursor for phospholipid synthesis. The protein is Glycerol-3-phosphate dehydrogenase [NAD(P)+] of Ehrlichia ruminantium (strain Gardel).